A 435-amino-acid chain; its full sequence is GTPase Der (435 aa).

EngA-type G domains are found at residues 3–168 (PLVA…PDET) and 176–351 (IKLA…QNRQ). Residues 9-16 (GRPNVGKS), 56-60 (DTGGY), 120-123 (NKVE), 182-189 (GRPNVGKS), 229-233 (DTAGL), and 294-297 (NKWD) each bind GTP. The KH-like domain occupies 352–435 (KKISTSELNR…VPVSFRYRKK (84 aa)).

Belongs to the TRAFAC class TrmE-Era-EngA-EngB-Septin-like GTPase superfamily. EngA (Der) GTPase family. Associates with the 50S ribosomal subunit.

GTPase that plays an essential role in the late steps of ribosome biogenesis. In Chlorobium phaeobacteroides (strain BS1), this protein is GTPase Der.